The sequence spans 441 residues: Ribulose bisphosphate carboxylase large chain (441 aa).

Lysine 5 carries the N6,N6,N6-trimethyllysine modification. Threonine 164 lines the substrate pocket. The Proton acceptor role is filled by lysine 166. Lysine 168 lines the substrate pocket. Residues lysine 192, aspartate 194, and glutamate 195 each contribute to the Mg(2+) site. The residue at position 192 (lysine 192) is an N6-carboxylysine. Histidine 285 serves as the catalytic Proton acceptor. Residues arginine 286, histidine 318, and serine 370 each coordinate substrate.

Belongs to the RuBisCO large chain family. Type I subfamily. As to quaternary structure, heterohexadecamer of 8 large chains and 8 small chains; disulfide-linked. The disulfide link is formed within the large subunit homodimers. The cofactor is Mg(2+). The disulfide bond which can form in the large chain dimeric partners within the hexadecamer appears to be associated with oxidative stress and protein turnover.

Its subcellular location is the plastid. It localises to the chloroplast. It carries out the reaction 2 (2R)-3-phosphoglycerate + 2 H(+) = D-ribulose 1,5-bisphosphate + CO2 + H2O. The catalysed reaction is D-ribulose 1,5-bisphosphate + O2 = 2-phosphoglycolate + (2R)-3-phosphoglycerate + 2 H(+). In terms of biological role, ruBisCO catalyzes two reactions: the carboxylation of D-ribulose 1,5-bisphosphate, the primary event in carbon dioxide fixation, as well as the oxidative fragmentation of the pentose substrate in the photorespiration process. Both reactions occur simultaneously and in competition at the same active site. The polypeptide is Ribulose bisphosphate carboxylase large chain (Hemionitis engywookii (Fendler's false cloak fern)).